A 75-amino-acid chain; its full sequence is MFTMKKSLLFLFFLGTISLSFCEEERGADEDDGGEMTEEEKRGVLDTLKNVAIGVAKGAGTGVLKALLCQLDKSC.

The N-terminal stretch at Met-1–Cys-22 is a signal peptide. A propeptide spans Glu-23 to Glu-40 (removed in mature form). Cys-69 and Cys-75 are joined by a disulfide.

The protein belongs to the frog skin active peptide (FSAP) family. Brevinin subfamily. As to expression, expressed by the skin glands.

It is found in the secreted. In terms of biological role, antimicrobial peptide. Active against some Gram-negative and a variety of Gram-positive bacterial strains. Active against fungus C.glabrata 090902 but not against C.albicans ATCC 10231. Shows hemolytic activity against human erythrocytes. This Sylvirana spinulosa (Fine-spined frog) protein is Brevinin-2SN2.